Here is a 434-residue protein sequence, read N- to C-terminus: Serine hydroxymethyltransferase 2 (434 aa).

(6S)-5,6,7,8-tetrahydrofolate-binding positions include leucine 136 and 140-142 (GHL). Residue lysine 245 is modified to N6-(pyridoxal phosphate)lysine.

The protein belongs to the SHMT family. Homodimer. Requires pyridoxal 5'-phosphate as cofactor.

It is found in the cytoplasm. The catalysed reaction is (6R)-5,10-methylene-5,6,7,8-tetrahydrofolate + glycine + H2O = (6S)-5,6,7,8-tetrahydrofolate + L-serine. It functions in the pathway one-carbon metabolism; tetrahydrofolate interconversion. Its pathway is amino-acid biosynthesis; glycine biosynthesis; glycine from L-serine: step 1/1. Catalyzes the reversible interconversion of serine and glycine with tetrahydrofolate (THF) serving as the one-carbon carrier. This reaction serves as the major source of one-carbon groups required for the biosynthesis of purines, thymidylate, methionine, and other important biomolecules. Also exhibits THF-independent aldolase activity toward beta-hydroxyamino acids, producing glycine and aldehydes, via a retro-aldol mechanism. This chain is Serine hydroxymethyltransferase 2, found in Rhodopseudomonas palustris (strain ATCC BAA-98 / CGA009).